A 325-amino-acid chain; its full sequence is Glucosyl-3-phosphoglycerate synthase (325 aa).

UDP-alpha-D-glucose-binding positions include 37–41 (PSLNE), Ser71, Lys104, and 124–125 (DS). Asp126 contacts Mn(2+). (2R)-3-phosphoglycerate is bound at residue 171-174 (GRVT). Residues 216-219 (YGVE) and 243-248 (RIHDNQ) contribute to the UDP-alpha-D-glucose site. His245 contributes to the Mn(2+) binding site. Asn247 is a (2R)-3-phosphoglycerate binding site.

Belongs to the glycosyltransferase 2 family. Homodimer in solution. Co(2+) is required as a cofactor. Mg(2+) serves as cofactor. Requires Mn(2+) as cofactor. The cofactor is Ni(2+). It depends on Zn(2+) as a cofactor.

The enzyme catalyses an NDP-alpha-D-glucose + (2R)-3-phosphoglycerate = (2R)-2-O-(alpha-D-glucopyranosyl)-3-phospho-glycerate + a ribonucleoside 5'-diphosphate + H(+). It carries out the reaction (2R)-3-phosphoglycerate + UDP-alpha-D-glucose = (2R)-2-O-(alpha-D-glucopyranosyl)-3-phospho-glycerate + UDP + H(+). It catalyses the reaction ADP-alpha-D-glucose + (2R)-3-phosphoglycerate = (2R)-2-O-(alpha-D-glucopyranosyl)-3-phospho-glycerate + ADP + H(+). Inhibited by ADP and EDTA. Its function is as follows. Involved in the biosynthesis of the compatible solute mannosylglucosylglycerate through a phosphorylating pathway. Catalyzes the transfer of the glucose moiety from a nuleotide sugar such as UDP-alpha-D-glucose to the position 2 of 3-phospho-D-glycerate (3-PGA) to form glucosyl-3-phosphoglycerate (GPG). UDP-glucose is the preferred substrate, but it can be partially replaced by ADP-glucose. This chain is Glucosyl-3-phosphoglycerate synthase, found in Petrotoga mobilis (strain DSM 10674 / SJ95).